Consider the following 337-residue polypeptide: Pseudouridine-5'-phosphate glycosidase (337 aa).

Glu26 (proton donor) is an active-site residue. Positions 87 and 107 each coordinate substrate. Position 139 (Asp139) interacts with Mn(2+). 141–143 (SAD) is a substrate binding site. Lys160 functions as the Nucleophile in the catalytic mechanism. Residues 306-325 (SSGPQAGAGAPGAEPGPARR) are compositionally biased toward low complexity. Positions 306–337 (SSGPQAGAGAPGAEPGPARRTSPARAPSGEGW) are disordered.

Belongs to the pseudouridine-5'-phosphate glycosidase family. As to quaternary structure, homotrimer. Mn(2+) serves as cofactor.

The catalysed reaction is D-ribose 5-phosphate + uracil = psi-UMP + H2O. Its function is as follows. Catalyzes the reversible cleavage of pseudouridine 5'-phosphate (PsiMP) to ribose 5-phosphate and uracil. Functions biologically in the cleavage direction, as part of a pseudouridine degradation pathway. The chain is Pseudouridine-5'-phosphate glycosidase from Methylobacterium nodulans (strain LMG 21967 / CNCM I-2342 / ORS 2060).